Reading from the N-terminus, the 153-residue chain is Transthyretin (153 aa).

The first 19 residues, 1 to 19 (MASFKSFLLLALLAIVSEA), serve as a signal peptide directing secretion. Cysteine 34 is subject to Sulfocysteine. L-thyroxine contacts are provided by lysine 39 and glutamate 78. Asparagine 81 carries N-linked (GlcNAc...) asparagine glycosylation. Serine 141 lines the L-thyroxine pocket.

Belongs to the transthyretin family. Homotetramer. Dimer of dimers. In the homotetramer, subunits assemble around a central channel that can accommodate two ligand molecules. Interacts with rbp4. In terms of processing, sulfonation of the reactive cysteine Cys-34 enhances the stability of the native conformation of TTR, avoiding misassembly of the protein leading to amyloid formation. In terms of tissue distribution, detected in plasma (at protein level). Expressed during metamorphosis in tadpole liver, but not in tadpole brain nor adult liver. Between 1.5 and 3 days of development, also expressed in the mesoderm of the kidney.

It localises to the secreted. Thyroid hormone-binding protein, with a much higher binding affinity for triiodothyronine (T3) than for thyroxine (T4). Probably transports triiodothyronine from the bloodstream to the brain. The sequence is that of Transthyretin (ttr) from Xenopus laevis (African clawed frog).